Here is a 192-residue protein sequence, read N- to C-terminus: Peptidyl-tRNA hydrolase (192 aa).

Residue Y18 coordinates tRNA. H23 functions as the Proton acceptor in the catalytic mechanism. TRNA contacts are provided by F69, N71, and N117.

This sequence belongs to the PTH family. In terms of assembly, monomer.

Its subcellular location is the cytoplasm. It catalyses the reaction an N-acyl-L-alpha-aminoacyl-tRNA + H2O = an N-acyl-L-amino acid + a tRNA + H(+). Its function is as follows. Hydrolyzes ribosome-free peptidyl-tRNAs (with 1 or more amino acids incorporated), which drop off the ribosome during protein synthesis, or as a result of ribosome stalling. Catalyzes the release of premature peptidyl moieties from peptidyl-tRNA molecules trapped in stalled 50S ribosomal subunits, and thus maintains levels of free tRNAs and 50S ribosomes. The sequence is that of Peptidyl-tRNA hydrolase from Neisseria meningitidis serogroup C (strain 053442).